We begin with the raw amino-acid sequence, 167 residues long: Ubiquitin-fold modifier-conjugating enzyme 1 (167 aa).

The active-site Glycyl thioester intermediate is cysteine 116. Lysine 122 participates in a covalent cross-link: Glycyl lysine isopeptide (Lys-Gly) (interchain with G-Cter in UFM1).

It belongs to the ubiquitin-conjugating enzyme family. UFC1 subfamily. Interacts with UBA5 (via C-terminus). Interacts with UFL1. Interacts with UFM1. Interacts with KIRREL3. In terms of processing, ufmylated at Lys-122. Deufmylated by UFSP1.

In terms of biological role, E2-like enzyme which specifically catalyzes the second step in ufmylation. Accepts the ubiquitin-like modifier UFM1 from the E1 enzyme UBA5 and forms an intermediate with UFM1 via a thioester linkage. Ufmylation is involved in various processes, such as ribosome recycling, response to DNA damage, interferon response or reticulophagy (also called ER-phagy). This is Ubiquitin-fold modifier-conjugating enzyme 1 from Homo sapiens (Human).